Consider the following 581-residue polypeptide: Proline--tRNA ligase (581 aa).

The protein belongs to the class-II aminoacyl-tRNA synthetase family. ProS type 1 subfamily. Homodimer.

It is found in the cytoplasm. The catalysed reaction is tRNA(Pro) + L-proline + ATP = L-prolyl-tRNA(Pro) + AMP + diphosphate. In terms of biological role, catalyzes the attachment of proline to tRNA(Pro) in a two-step reaction: proline is first activated by ATP to form Pro-AMP and then transferred to the acceptor end of tRNA(Pro). As ProRS can inadvertently accommodate and process non-cognate amino acids such as alanine and cysteine, to avoid such errors it has two additional distinct editing activities against alanine. One activity is designated as 'pretransfer' editing and involves the tRNA(Pro)-independent hydrolysis of activated Ala-AMP. The other activity is designated 'posttransfer' editing and involves deacylation of mischarged Ala-tRNA(Pro). The misacylated Cys-tRNA(Pro) is not edited by ProRS. This is Proline--tRNA ligase from Chlamydia trachomatis serovar D (strain ATCC VR-885 / DSM 19411 / UW-3/Cx).